We begin with the raw amino-acid sequence, 329 residues long: DNA-directed RNA polymerase subunit alpha (329 aa).

The interval 1-235 (MQGSVTEFLK…EQLEAFVDLR (235 aa)) is alpha N-terminal domain (alpha-NTD). Residues 249–329 (FDPILLRPVD…NWPPASIADE (81 aa)) form an alpha C-terminal domain (alpha-CTD) region.

This sequence belongs to the RNA polymerase alpha chain family. As to quaternary structure, homodimer. The RNAP catalytic core consists of 2 alpha, 1 beta, 1 beta' and 1 omega subunit. When a sigma factor is associated with the core the holoenzyme is formed, which can initiate transcription.

The enzyme catalyses RNA(n) + a ribonucleoside 5'-triphosphate = RNA(n+1) + diphosphate. Functionally, DNA-dependent RNA polymerase catalyzes the transcription of DNA into RNA using the four ribonucleoside triphosphates as substrates. This chain is DNA-directed RNA polymerase subunit alpha, found in Pectobacterium atrosepticum (strain SCRI 1043 / ATCC BAA-672) (Erwinia carotovora subsp. atroseptica).